The primary structure comprises 734 residues: MALRFPRFSQGLAQDPTTRRIWFGIATAHDFESHDDITEERLYQNIFASHFGQLAIIFLWTSGNLFHVAWQGNFESWIQDPLHVRPIAHAIWDPHFGQPAVEAFTRGGAIGPVNIAYSGVYQWWYTIGLRTNEDLYTGALFLLCLSAISLIAGWLHLQPKWKPSLSWFKNAESRLNHHLSGLFGVSSLAWAGHLVHVAIPGSRGEYVRWNNFLNVLPHPQGLEPLLTGQWNLYAQNSDSSSHLFGTSKGAGTAILTLLGGFHPQTQSLWLTDIAHHHLAIAFLFLVAGHMYRTNFGIGHSIKDLLEAHIPPGGRLGRGHKGLYDTINNSIHFQLGLALASLGVITSLVAQHMYSLPAYAFIAQDFTTQAALYTHHQYIAGFIMTGAFAHGAIFFIRDYNPEQNEDNVLARMLDHKEAIISHLSWASLFLGFHTLGLYVHNDVMLAFGTPEKQILIEPIFAQWIQSAHGKTSYGFDVLLSSTNGPAFNAGRSIWLPGWLNAINENSNSLFLTIGPGDFLVHHAIALGLHTTTLILVKGALDARGSKLMPDKKDFGYSFPCDGPGRGGTCDISAWDAFYLAVFWMLNTIGWVTFYWHWKHITLWQGNVSQFNESSTYLMGWLRDYLWLNSSQLINGYNPFGMNSLSVWAWMFLFGHLVWATGFMFLISWRGYWQELIETLAWAHERTPLANLIRWRDKPVALSIVQARLVGLAHFSVGYIFTYAAFLIASTSGKFG.

8 consecutive transmembrane segments (helical) span residues 46–69 (IFAS…FHVA), 135–158 (LYTG…LHLQ), 175–199 (LNHH…HVAI), 273–291 (IAHH…GHMY), 330–353 (IHFQ…QHMY), 369–395 (AALY…IFFI), 417–439 (AIIS…LYVH), and 517–535 (FLVH…LILV). The [4Fe-4S] cluster site is built by C559 and C568. 2 helical membrane passes run 575–596 (AFYL…YWHW) and 643–665 (LSVW…MFLI). Residues H654, M662, and Y670 each coordinate chlorophyll a. A phylloquinone-binding site is contributed by W671. The helical transmembrane segment at 707 to 727 (LVGLAHFSVGYIFTYAAFLIA) threads the bilayer.

This sequence belongs to the PsaA/PsaB family. In terms of assembly, the PsaA/B heterodimer binds the P700 chlorophyll special pair and subsequent electron acceptors. PSI consists of a core antenna complex that captures photons, and an electron transfer chain that converts photonic excitation into a charge separation. The eukaryotic PSI reaction center is composed of at least 11 subunits. P700 is a chlorophyll a/chlorophyll a' dimer, A0 is one or more chlorophyll a, A1 is one or both phylloquinones and FX is a shared 4Fe-4S iron-sulfur center. is required as a cofactor.

It is found in the plastid. It localises to the chloroplast thylakoid membrane. The catalysed reaction is reduced [plastocyanin] + hnu + oxidized [2Fe-2S]-[ferredoxin] = oxidized [plastocyanin] + reduced [2Fe-2S]-[ferredoxin]. In terms of biological role, psaA and PsaB bind P700, the primary electron donor of photosystem I (PSI), as well as the electron acceptors A0, A1 and FX. PSI is a plastocyanin-ferredoxin oxidoreductase, converting photonic excitation into a charge separation, which transfers an electron from the donor P700 chlorophyll pair to the spectroscopically characterized acceptors A0, A1, FX, FA and FB in turn. Oxidized P700 is reduced on the lumenal side of the thylakoid membrane by plastocyanin. The polypeptide is Photosystem I P700 chlorophyll a apoprotein A2 (Dioscorea elephantipes (Elephant's foot yam)).